The chain runs to 369 residues: DNA replication and repair protein RecF (369 aa).

30–37 is an ATP binding site; the sequence is GDNGSGKT.

This sequence belongs to the RecF family.

It localises to the cytoplasm. The RecF protein is involved in DNA metabolism; it is required for DNA replication and normal SOS inducibility. RecF binds preferentially to single-stranded, linear DNA. It also seems to bind ATP. This is DNA replication and repair protein RecF from Pseudomonas aeruginosa (strain UCBPP-PA14).